The chain runs to 428 residues: MSAIVDIFAREILDSRGNPTVECDVLLESGVMGRAAVPSGASTGQKEALELRDGDKSRYSGKGVLKAVEHVNNQIAQALIGIDANEQSYIDQIMIELDGTENKGNLGANATLAVSMAVARAAAEDSGLPLYRYLGGAGPMSLPVPMMNVINGGEHANNSLNIQEFMIMPVGAKSFREALRCGAEIFHALKKLCDSKGFPTTVGDEGGFAPNLNSHKEALQLMVEATEAAGYKAGEDVLFALDCASSEFYKDGKYHLEAEGRSYTNAEFAEYLESLVNEFPIISIEDGMDENDWEGWKLLTEKLGGKVQLVGDDLFVTNPKILAEGIEKGVANALLVKVNQIGTLSETLKAVDLAKRNRYASVMSHRSGETEDSTIADLAVATNCMQIKTGSLSRSDRMAKYNQLLRIEEELAEAADYPGKAAFYQLGK.

Q163 is a binding site for (2R)-2-phosphoglycerate. The Proton donor role is filled by E205. D242, E285, and D312 together coordinate Mg(2+). (2R)-2-phosphoglycerate-binding residues include K337, R366, S367, and K388. The active-site Proton acceptor is the K337.

The protein belongs to the enolase family. The cofactor is Mg(2+).

The protein localises to the cytoplasm. The protein resides in the secreted. Its subcellular location is the cell surface. It catalyses the reaction (2R)-2-phosphoglycerate = phosphoenolpyruvate + H2O. It functions in the pathway carbohydrate degradation; glycolysis; pyruvate from D-glyceraldehyde 3-phosphate: step 4/5. Functionally, catalyzes the reversible conversion of 2-phosphoglycerate (2-PG) into phosphoenolpyruvate (PEP). It is essential for the degradation of carbohydrates via glycolysis. This Neisseria meningitidis serogroup C (strain 053442) protein is Enolase.